A 235-amino-acid polypeptide reads, in one-letter code: Small ribosomal subunit protein uS2 (235 aa).

The protein belongs to the universal ribosomal protein uS2 family.

This chain is Small ribosomal subunit protein uS2, found in Thermoanaerobacter sp. (strain X514).